The primary structure comprises 662 residues: DNA ligase (662 aa).

Residues 31-35, 79-80, and Glu119 each bind NAD(+); these read DSEYD and SL. The active-site N6-AMP-lysine intermediate is the Lys121. The NAD(+) site is built by Arg142, Glu176, Lys288, and Lys312. Zn(2+)-binding residues include Cys405, Cys408, Cys421, and Cys427. In terms of domain architecture, BRCT spans 583 to 662; the sequence is NIEKKLDNLT…DELNSFLDNL (80 aa).

This sequence belongs to the NAD-dependent DNA ligase family. LigA subfamily. The cofactor is Mg(2+). Mn(2+) serves as cofactor.

The catalysed reaction is NAD(+) + (deoxyribonucleotide)n-3'-hydroxyl + 5'-phospho-(deoxyribonucleotide)m = (deoxyribonucleotide)n+m + AMP + beta-nicotinamide D-nucleotide.. Functionally, DNA ligase that catalyzes the formation of phosphodiester linkages between 5'-phosphoryl and 3'-hydroxyl groups in double-stranded DNA using NAD as a coenzyme and as the energy source for the reaction. It is essential for DNA replication and repair of damaged DNA. This is DNA ligase from Finegoldia magna (strain ATCC 29328 / DSM 20472 / WAL 2508) (Peptostreptococcus magnus).